A 490-amino-acid polypeptide reads, in one-letter code: Betaine aldehyde dehydrogenase (490 aa).

Asn-93 is a binding site for K(+). 150 to 152 (GAW) serves as a coordination point for NAD(+). The active-site Charge relay system is Lys-162. Residue 176 to 179 (KPSE) coordinates NAD(+). Val-180 is a K(+) binding site. 230-233 (GTAT) serves as a coordination point for NAD(+). Residue Leu-246 coordinates K(+). Residue Glu-252 is the Proton acceptor of the active site. 3 residues coordinate NAD(+): Gly-254, Cys-286, and Glu-387. The Nucleophile role is filled by Cys-286. Cys-286 carries the cysteine sulfenic acid (-SOH) modification. K(+) contacts are provided by Lys-457 and Gly-460. Glu-464 serves as the catalytic Charge relay system.

Belongs to the aldehyde dehydrogenase family. Dimer of dimers. K(+) is required as a cofactor.

The catalysed reaction is betaine aldehyde + NAD(+) + H2O = glycine betaine + NADH + 2 H(+). It functions in the pathway amine and polyamine biosynthesis; betaine biosynthesis via choline pathway; betaine from betaine aldehyde: step 1/1. Involved in the biosynthesis of the osmoprotectant glycine betaine. Catalyzes the irreversible oxidation of betaine aldehyde to the corresponding acid. The protein is Betaine aldehyde dehydrogenase of Xanthomonas campestris pv. campestris (strain ATCC 33913 / DSM 3586 / NCPPB 528 / LMG 568 / P 25).